The sequence spans 514 residues: Alanine--glyoxylate aminotransferase 2, mitochondrial (514 aa).

The transit peptide at 1–41 directs the protein to the mitochondrion; sequence MTLIWRHLLRPLCLVTPAPRILEMRPFLNLGASWTSVTKLS. Lysine 71 is modified (N6-acetyllysine; alternate). Residue lysine 71 is modified to N6-succinyllysine; alternate. N6-acetyllysine is present on lysine 84. Residue lysine 262 is modified to N6-acetyllysine; alternate. Position 262 is an N6-succinyllysine; alternate (lysine 262). An N6-succinyllysine modification is found at lysine 304. Position 350 is an N6-(pyridoxal phosphate)lysine (lysine 350). An N6-acetyllysine; alternate modification is found at lysine 420. Position 420 is an N6-succinyllysine; alternate (lysine 420).

It belongs to the class-III pyridoxal-phosphate-dependent aminotransferase family. Homotetramer. The cofactor is pyridoxal 5'-phosphate.

The protein localises to the mitochondrion. The enzyme catalyses glyoxylate + L-alanine = glycine + pyruvate. It carries out the reaction (R)-3-amino-2-methylpropanoate + pyruvate = 2-methyl-3-oxopropanoate + L-alanine. It catalyses the reaction 3-oxopropanoate + L-alanine = beta-alanine + pyruvate. The catalysed reaction is 2-oxobutanoate + L-alanine = (2S)-2-aminobutanoate + pyruvate. The enzyme catalyses N(omega),N(omega)-dimethyl-L-arginine + pyruvate = 5-(3,3-dimethylguanidino)-2-oxopentanoate + L-alanine. It carries out the reaction N(omega),N('omega)-dimethyl-L-arginine + pyruvate = 5-(3,3'-dimethylguanidino)-2-oxopentanoate + L-alanine. It catalyses the reaction N(omega),N(omega)-dimethyl-L-arginine + glyoxylate = 5-(3,3-dimethylguanidino)-2-oxopentanoate + glycine. The catalysed reaction is N(omega),N('omega)-dimethyl-L-arginine + glyoxylate = 5-(3,3'-dimethylguanidino)-2-oxopentanoate + glycine. The enzyme catalyses N(omega)-methyl-L-arginine + pyruvate = 5-(3-methylguanidino)-2-oxopentanoate + L-alanine. It carries out the reaction N(omega)-methyl-L-arginine + glyoxylate = 5-(3-methylguanidino)-2-oxopentanoate + glycine. It catalyses the reaction L-ornithine + pyruvate = 5-amino-2-oxopentanoate + L-alanine. The catalysed reaction is L-ornithine + glyoxylate = 5-amino-2-oxopentanoate + glycine. The enzyme catalyses (2S)-2-aminobutanoate + glyoxylate = 2-oxobutanoate + glycine. It carries out the reaction N(omega),N(omega)-dimethyl-L-arginine + oxaloacetate = 5-(3,3-dimethylguanidino)-2-oxopentanoate + L-aspartate. It catalyses the reaction oxaloacetate + L-alanine = L-aspartate + pyruvate. The catalysed reaction is N(omega),N(omega)-dimethyl-L-arginine + 2-oxobutanoate = 5-(3,3-dimethylguanidino)-2-oxopentanoate + (2S)-2-aminobutanoate. The enzyme catalyses 2-oxopentanoate + N(omega),N(omega)-dimethyl-L-arginine = 5-(3,3-dimethylguanidino)-2-oxopentanoate + L-2-aminopentanoate. It carries out the reaction 2-oxohexanoate + N(omega),N(omega)-dimethyl-L-arginine = L-2-aminohexanoate + 5-(3,3-dimethylguanidino)-2-oxopentanoate. Its function is as follows. Multifunctional aminotransferase with a broad substrate specificity. Catalyzes the conversion of glyoxylate to glycine using alanine as the amino donor. Catalyzes metabolism of not L- but the D-isomer of D-beta-aminoisobutyric acid to generate 2-methyl-3-oxopropanoate and alanine. Catalyzes the transfer of the amino group from beta-alanine to pyruvate to yield L-alanine and 3-oxopropanoate. Can metabolize NG-monomethyl-L-arginine (NMMA), asymmetric NG,NG-dimethyl-L-arginine (ADMA) and symmetric NG,N'G-dimethyl-L-arginine (SDMA). ADMA is a potent inhibitor of nitric-oxide (NO) synthase, and this activity provides mechanism through which the kidney regulates blood pressure. The protein is Alanine--glyoxylate aminotransferase 2, mitochondrial (AGXT2) of Pongo abelii (Sumatran orangutan).